The following is a 424-amino-acid chain: Phosphomethylpyrimidine synthase (424 aa).

Substrate contacts are provided by residues M94, Y123, H162, 184–186, 225–228, and E264; these read SRG and NGMR. Position 268 (H268) interacts with Zn(2+). Y291 contributes to the substrate binding site. Position 332 (H332) interacts with Zn(2+). [4Fe-4S] cluster-binding residues include C406, C409, and C413.

It belongs to the ThiC family. [4Fe-4S] cluster is required as a cofactor.

The enzyme catalyses 5-amino-1-(5-phospho-beta-D-ribosyl)imidazole + S-adenosyl-L-methionine = 4-amino-2-methyl-5-(phosphooxymethyl)pyrimidine + CO + 5'-deoxyadenosine + formate + L-methionine + 3 H(+). The protein operates within cofactor biosynthesis; thiamine diphosphate biosynthesis. In terms of biological role, catalyzes the synthesis of the hydroxymethylpyrimidine phosphate (HMP-P) moiety of thiamine from aminoimidazole ribotide (AIR) in a radical S-adenosyl-L-methionine (SAM)-dependent reaction. The chain is Phosphomethylpyrimidine synthase from Methanoculleus marisnigri (strain ATCC 35101 / DSM 1498 / JR1).